We begin with the raw amino-acid sequence, 266 residues long: Aquaporin TIP3-2 (266 aa).

2 helical membrane-spanning segments follow: residues 29-49 (AAIS…GSVL) and 66-86 (GLVA…AVAV). The NPA 1 signature appears at 94–96 (NPA). 3 helical membrane-spanning segments follow: residues 109-129 (LVRA…ATLL), 153-173 (AVLL…ATVV), and 180-200 (LGTI…LAGG). The NPA 2 signature appears at 208–210 (NPA). Residues 228–248 (YWLGPFLGAGLAGLVYEYLLI) traverse the membrane as a helical segment.

The protein belongs to the MIP/aquaporin (TC 1.A.8) family. TIP (TC 1.A.8.10) subfamily.

The protein localises to the vacuole membrane. Functionally, aquaporins facilitate the transport of water and small neutral solutes across cell membranes. The protein is Aquaporin TIP3-2 (TIP3-2) of Zea mays (Maize).